A 386-amino-acid chain; its full sequence is L-lactate dehydrogenase (386 aa).

The FMN hydroxy acid dehydrogenase domain maps to 1–380 (MIISAASDYR…SGDALSRVTR (380 aa)). Tyr24 is a substrate binding site. FMN-binding residues include Ser106 and Gln127. Tyr129 contributes to the substrate binding site. FMN is bound at residue Thr155. A substrate-binding site is contributed by Arg164. Residue Lys251 participates in FMN binding. His275 serves as the catalytic Proton acceptor. Position 278 (Arg278) interacts with substrate. 306–330 (DSGIRSGLDVVRMLALGADAVLLGR) is an FMN binding site.

It belongs to the FMN-dependent alpha-hydroxy acid dehydrogenase family. FMN is required as a cofactor.

It localises to the cell inner membrane. It carries out the reaction (S)-lactate + A = pyruvate + AH2. Catalyzes the conversion of L-lactate to pyruvate. Is coupled to the respiratory chain. This Xanthomonas campestris pv. campestris (strain 8004) protein is L-lactate dehydrogenase.